The sequence spans 734 residues: 1,4-alpha-glucan branching enzyme GlgB (734 aa).

D413 (nucleophile) is an active-site residue. E466 (proton donor) is an active-site residue.

Belongs to the glycosyl hydrolase 13 family. GlgB subfamily. As to quaternary structure, monomer.

The enzyme catalyses Transfers a segment of a (1-&gt;4)-alpha-D-glucan chain to a primary hydroxy group in a similar glucan chain.. Its pathway is glycan biosynthesis; glycogen biosynthesis. In terms of biological role, catalyzes the formation of the alpha-1,6-glucosidic linkages in glycogen by scission of a 1,4-alpha-linked oligosaccharide from growing alpha-1,4-glucan chains and the subsequent attachment of the oligosaccharide to the alpha-1,6 position. The protein is 1,4-alpha-glucan branching enzyme GlgB of Nitrosomonas europaea (strain ATCC 19718 / CIP 103999 / KCTC 2705 / NBRC 14298).